We begin with the raw amino-acid sequence, 465 residues long: Nucleolar and spindle-associated protein 1 (465 aa).

Residues 32-61 adopt a coiled-coil conformation; it reads ADKLLRALKAHLKNEARKENENQDEIQTSA. 3 disordered regions span residues 44–123, 148–207, and 252–294; these read KNEA…QNHS, VEVP…TPNF, and GVPA…GSAK. Polar residues predominate over residues 56 to 75; the sequence is EIQTSASSCDEPEIQTSSQE. Basic and acidic residues predominate over residues 76–86; the sequence is QAEREPDDHVT. Residues 87 to 96 are compositionally biased toward basic residues; that stretch reads KTRGRRKTVH. Phosphoserine is present on Ser-152. Positions 154-166 are enriched in polar residues; the sequence is PNESQGDENTVSS. Over residues 169–179 the composition is skewed to basic and acidic residues; the sequence is HGIDGNEDPRV. Thr-204 bears the Phosphothreonine mark. Residues 262-405 form an interaction with microtubules region; it reads GRLSVACTPG…HKGKLKPWGQ (144 aa). Ser-265 carries the phosphoserine modification. Thr-269 bears the Phosphothreonine mark. 4 positions are modified to phosphoserine: Ser-272, Ser-292, Ser-299, and Ser-334. Residues 308–338 are disordered; that stretch reads SAATKDNEHKRSLTKTPARKSPHVTTSVNTP. Thr-337, Thr-361, and Thr-372 each carry phosphothreonine. Phosphoserine is present on residues Ser-375 and Ser-386. The segment at 396–454 is disordered; the sequence is HKGKLKPWGQSKENNSLHEHVNRVSFHKKTYKQPRLQTREEQRKKHERERKEKKEKVLG. A KEN box motif is present at residues 407–413; the sequence is KENNSLH. A coiled-coil region spans residues 430–457; it reads RLQTREEQRKKHERERKEKKEKVLGVRR. Basic and acidic residues predominate over residues 432–453; the sequence is QTREEQRKKHERERKEKKEKVL.

The protein belongs to the NUSAP family. Interacts with DNA and microtubules. Microtubule bundling is inhibited by IPO7, KPNA2 and KPNB1 while association with DNA is also inhibited by IPO7 and KPNA2. Post-translationally, ubiquitinated. Ubiquitination by FZR1 may lead to proteasome-dependent degradation of this protein.

It is found in the cytoplasm. The protein resides in the nucleus. The protein localises to the nucleolus. Its subcellular location is the cytoskeleton. It localises to the spindle. It is found in the chromosome. Functionally, microtubule-associated protein with the capacity to bundle and stabilize microtubules. May associate with chromosomes and promote the organization of mitotic spindle microtubules around them. This Bos taurus (Bovine) protein is Nucleolar and spindle-associated protein 1 (NUSAP1).